The sequence spans 340 residues: GTP 3',8-cyclase (340 aa).

The 220-residue stretch at 8 to 227 (KLGRPIRDLR…TMIEQHFEID (220 aa)) folds into the Radical SAM core domain. GTP is bound at residue arginine 17. [4Fe-4S] cluster is bound by residues cysteine 24 and cysteine 28. S-adenosyl-L-methionine is bound at residue tyrosine 30. Cysteine 31 is a binding site for [4Fe-4S] cluster. Residue arginine 71 participates in GTP binding. Glycine 75 is a binding site for S-adenosyl-L-methionine. A GTP-binding site is contributed by threonine 102. Serine 126 lines the S-adenosyl-L-methionine pocket. Lysine 163 contacts GTP. Methionine 197 lines the S-adenosyl-L-methionine pocket. Residues cysteine 261 and cysteine 264 each coordinate [4Fe-4S] cluster. Residue 266–268 (RAR) coordinates GTP. Cysteine 278 is a binding site for [4Fe-4S] cluster.

Belongs to the radical SAM superfamily. MoaA family. In terms of assembly, monomer and homodimer. It depends on [4Fe-4S] cluster as a cofactor.

It carries out the reaction GTP + AH2 + S-adenosyl-L-methionine = (8S)-3',8-cyclo-7,8-dihydroguanosine 5'-triphosphate + 5'-deoxyadenosine + L-methionine + A + H(+). It participates in cofactor biosynthesis; molybdopterin biosynthesis. Its function is as follows. Catalyzes the cyclization of GTP to (8S)-3',8-cyclo-7,8-dihydroguanosine 5'-triphosphate. The sequence is that of GTP 3',8-cyclase from Staphylococcus aureus (strain MRSA252).